Reading from the N-terminus, the 512-residue chain is Histidine ammonia-lyase (512 aa).

Positions 142-144 (ASG) form a cross-link, 5-imidazolinone (Ala-Gly). Position 143 is a 2,3-didehydroalanine (Ser) (Ser-143).

Belongs to the PAL/histidase family. Contains an active site 4-methylidene-imidazol-5-one (MIO), which is formed autocatalytically by cyclization and dehydration of residues Ala-Ser-Gly.

The protein resides in the cytoplasm. The catalysed reaction is L-histidine = trans-urocanate + NH4(+). It functions in the pathway amino-acid degradation; L-histidine degradation into L-glutamate; N-formimidoyl-L-glutamate from L-histidine: step 1/3. The polypeptide is Histidine ammonia-lyase (Allorhizobium ampelinum (strain ATCC BAA-846 / DSM 112012 / S4) (Agrobacterium vitis (strain S4))).